The sequence spans 156 residues: FUN14 domain-containing protein 1 (156 aa).

Residues 19–22 (YEVL) carry the YXXL motif. Transmembrane regions (helical) follow at residues 49-69 (YSVA…GFLF), 76-96 (AATA…SGYV), and 135-155 (FIKQ…LGLA).

Belongs to the FUN14 family.

It localises to the mitochondrion outer membrane. Functionally, acts as an activator of hypoxia-induced mitophagy, an important mechanism for mitochondrial quality control. The protein is FUN14 domain-containing protein 1 (FUNDC1) of Gallus gallus (Chicken).